A 170-amino-acid polypeptide reads, in one-letter code: VIP peptides (170 aa).

An N-terminal signal peptide occupies residues 1–20 (MDTRNKAQLLVLLTLLSVLF). The propeptide occupies 21–79 (SQTSAWPLYRAPSALRLGDRIPFEGANEPDQVSLKEDIDMLQNALAENDTPYYDVSRNA). Residue Ser76 is modified to Phosphoserine. Met107 is modified (methionine amide). The residue at position 152 (Asn152) is an Asparagine amide. Residues 156–170 (SSEGESPDFPEELEK) constitute a propeptide that is removed on maturation.

The protein belongs to the glucagon family.

Its subcellular location is the secreted. VIP is a neuropeptide involved in a diverse array of physiological processes through activating the PACAP subfamily of class B1 G protein-coupled receptors: VIP receptor 1 (VPR1) and VIP receptor 2 (VPR2). Abundantly expressed throughout the CNS and peripheral nervous systems where they primarily exert neuroprotective and immune modulatory roles. Also causes vasodilation, lowers arterial blood pressure, stimulates myocardial contractility, increases glycogenolysis and relaxes the smooth muscle of trachea, stomach and gall bladder. Its function is as follows. PHM-27 and PHV-42 are two bioactive forms from proteolysis of the same precursor protein, that cause vasodilation. PHM-27 is a potent agonist of the calcitonin receptor CALCR, with similar efficacy as calcitonin. The chain is VIP peptides from Homo sapiens (Human).